A 136-amino-acid polypeptide reads, in one-letter code: uncharacterized protein (136 aa).

The chain crosses the membrane as a helical span at residues 102–118 (FVIVFFFFSFSLSISCV).

The protein resides in the membrane. This is an uncharacterized protein from Saccharomyces cerevisiae (strain ATCC 204508 / S288c) (Baker's yeast).